Consider the following 269-residue polypeptide: Putative carbamate hydrolase RutD (269 aa).

The 119-residue stretch at 26-144 folds into the AB hydrolase-1 domain; that stretch reads VVLLSSGLGG…CFDTRLHLLN (119 aa).

This sequence belongs to the AB hydrolase superfamily. Hydrolase RutD family.

The catalysed reaction is carbamate + 2 H(+) = NH4(+) + CO2. Involved in pyrimidine catabolism. May facilitate the hydrolysis of carbamate, a reaction that can also occur spontaneously. The sequence is that of Putative carbamate hydrolase RutD from Caulobacter vibrioides (strain ATCC 19089 / CIP 103742 / CB 15) (Caulobacter crescentus).